Reading from the N-terminus, the 106-residue chain is Nucleoid-associated protein Smlt1015 (106 aa).

The interval 81 to 106 (IDAESKSKMGSATAGMQLPPGMKLPF) is disordered.

The protein belongs to the YbaB/EbfC family. As to quaternary structure, homodimer.

It localises to the cytoplasm. The protein resides in the nucleoid. Its function is as follows. Binds to DNA and alters its conformation. May be involved in regulation of gene expression, nucleoid organization and DNA protection. The protein is Nucleoid-associated protein Smlt1015 of Stenotrophomonas maltophilia (strain K279a).